Consider the following 676-residue polypeptide: Envelope glycoprotein (676 aa).

An N-terminal signal peptide occupies residues 1–32 (MGVTGILQLPRDRFKRTSFFLWVIILFQRTFS). The Extracellular segment spans residues 33-650 (IPLGVIHNST…NDNWWTGWRQ (618 aa)). N40 carries N-linked (GlcNAc...) asparagine; by host glycosylation. 5 disulfide bridges follow: C53/C609, C108/C135, C121/C147, C511/C556, and C601/C608. The interval 54 to 201 (RDKLSSTNQL…DFFSSHPLRE (148 aa)) is receptor-binding. N-linked (GlcNAc...) asparagine; by host glycans are attached at residues N204, N228, N238, N257, N268, N296, N317, N333, N346, N386, and N413. Positions 305 to 485 (ELSFTVVSNG…SGKLGLITNT (181 aa)) are mucin-like region. Residues 315 to 335 (AKNISGQSPARTSSDPGTNTT) are compositionally biased toward polar residues. The segment at 315–337 (AKNISGQSPARTSSDPGTNTTTE) is disordered. Polar residues predominate over residues 373–391 (TSPQSLTTKPGPDNSTHNT). 2 disordered regions span residues 373 to 392 (TSPQ…HNTP) and 402 to 479 (TQVE…SGKL). A compositionally biased stretch (low complexity) spans 414 to 432 (DSTASDTPSATTAAGPPKA). Residues 433 to 464 (ENTNTSKSTDFLDPATTTSPQNHSETAGNNNT) show a composition bias toward polar residues. Residues N436, N454, and N462 are each glycosylated (N-linked (GlcNAc...) asparagine; by host). The segment at 524 to 539 (GAAIGLAWIPYFGPAA) is fusion peptide. A coiled-coil region spans residues 554 to 595 (LICGLRQLANETTQALQLFLRATTELRTFSILNRKAIDFLLQ). A glycan (N-linked (GlcNAc...) asparagine; by host) is linked at N563. Residues 615 to 634 (WTKNITDKIDQIIHDFVDKT) adopt a coiled-coil conformation. N618 carries N-linked (GlcNAc...) asparagine; by host glycosylation. A helical membrane pass occupies residues 651-671 (WIPAGIGVTGVIIAVIALFCI). 2 S-palmitoyl cysteine; by host lipidation sites follow: C670 and C672. Residues 672–676 (CKFVF) are Cytoplasmic-facing.

The protein belongs to the filoviruses glycoprotein family. In terms of assembly, homotrimer; each monomer consists of a GP1 and a GP2 subunit linked by disulfide bonds. The resulting peplomers (GP1,2) protrude from the virus surface as spikes. Interacts with host integrin alpha-V/ITGAV. Interacts with host CLEC10A. Binds also to host CD209 and CLEC4M/DC-SIGN(R). Interacts with host FOLR1. Interacts with BST2; this interaction inhibits the antiviral effect of BST2 and this allows viral release from infected cells. Interacts with host FCN1; this interaction enhances viral entry. Interacts with host TLR4; this interaction induces cell death in T-lymphocytes or proinflammatory cytokines and SOCS1 production in monocytes. Interacts with host entry receptor NPC1. As to quaternary structure, GP1 and GP2delta are part of GP1,2delta soluble complexes released by ectodomain shedding. Post-translationally, the signal peptide region modulates GP's high mannose glycosylation, thereby determining the efficiency of the interactions with DC-SIGN(R). In terms of processing, N-glycosylated. O-glycosylated in the mucin-like region. Post-translationally, palmitoylation of GP2 is not required for its function. In terms of processing, specific enzymatic cleavages in vivo yield mature proteins. The precursor is processed into GP1 and GP2 by host cell furin in the trans Golgi, and maybe by other host proteases, to yield the mature GP1 and GP2 proteins. The cleavage site corresponds to the furin optimal cleavage sequence [KR]-X-[KR]-R. This cleavage does not seem to be required for function. After the internalization of the virus into cell endosomes, GP1 C-terminus is removed by the endosomal proteases cathepsin B, cathepsin L, or both, leaving a 19-kDa N-terminal fragment which is further digested by cathepsin B. Proteolytic processing of GP1,2 by host ADAM17 can remove the transmembrane anchor of GP2 and leads to shedding of complexes consisting in GP1 and truncated GP2 (GP1,2delta).

The protein localises to the virion membrane. Its subcellular location is the host cell membrane. It is found in the secreted. Its function is as follows. Trimeric GP1,2 complexes form the virion surface spikes and mediate the viral entry processes, with GP1 acting as the receptor-binding subunit and GP2 as the membrane fusion subunit. At later times of infection, down-regulates the expression of various host cell surface molecules that are essential for immune surveillance and cell adhesion. Down-modulates several integrins including ITGA1, ITGA2, ITGA3, ITGA4, ITGA5, ITGA6, ITGAV and ITGB1. This decrease in cell adhesion molecules may lead to cell detachment, contributing to the disruption of blood vessel integrity and hemorrhages developed during infection (cytotoxicity). Interacts with host TLR4 and thereby stimulates the differentiation and activation of monocytes leading to bystander death of T-lymphocytes. Down-regulates as well the function of host natural killer cells. Counteracts the antiviral effect of host BST2/tetherin that restricts release of progeny virions from infected cells. However, cooperates with VP40 and host BST2 to activate canonical NF-kappa-B pathway in a manner dependent on neddylation. Functionally, functions as a decoy for anti-GP1,2 antibodies thereby contributing to viral immune evasion. Interacts and activates host macrophages and dendritic cells inducing up-regulation of cytokine transcription. This effect is mediated throught activation of host TLR4. In terms of biological role, responsible for binding to the receptor(s) on target cells. Interacts with CD209/DC-SIGN and CLEC4M/DC-SIGNR which act as cofactors for virus entry into dendritic cells (DCs) and endothelial cells. Binding to the macrophage specific lectin CLEC10A also seems to enhance virus infectivity. Interaction with FOLR1/folate receptor alpha may be a cofactor for virus entry in some cell types, although results are contradictory. Members of the Tyro3 receptor tyrosine kinase family also seem to be cell entry factors in filovirus infection. Once attached, the virions are internalized through clathrin-dependent endocytosis and/or macropinocytosis. After internalization of the virus into the endosomes of the host cell, proteolysis of GP1 by two cysteine proteases, CTSB/cathepsin B and CTSL/cathepsin L removes the glycan cap and allows GP1 binding to the host entry receptor NPC1. NPC1-binding, Ca(2+) and acidic pH induce a conformational change of GP2, which unmasks its fusion peptide and permit membranes fusion. Acts as a class I viral fusion protein. Under the current model, the protein has at least 3 conformational states: pre-fusion native state, pre-hairpin intermediate state, and post-fusion hairpin state. During viral and target cell membrane fusion, the coiled coil regions (heptad repeats) assume a trimer-of-hairpins structure, positioning the fusion peptide in close proximity to the C-terminal region of the ectodomain. The formation of this structure appears to drive apposition and subsequent fusion of viral and target cell membranes. Responsible for penetration of the virus into the cell cytoplasm by mediating the fusion of the membrane of the endocytosed virus particle with the endosomal membrane. Low pH in endosomes induces an irreversible conformational change in GP2, releasing the fusion hydrophobic peptide. The sequence is that of Envelope glycoprotein (GP) from Epomops franqueti (Franquet's epauletted fruit bat).